The primary structure comprises 867 residues: MLGLSKILRMGEGRAVKRLAKIADQVMDLDEEYTKLTDEELQAKTDELKKRVQEDGESLDDILLEAFATAREASWRVLGQKHYKVQIMGGAGLHFGYVSEMKTGEGKTLTCVLPAYLNALSGKGVHVVTVNDYLAKRDAEWMGRVHRFLGLSTDVILSGKNPAERREAYNADITYGTNNEFGFDYLRDNMAHSLNDLVQRGHNYAIVDEVDSILIDEARTPLIISGPVEGSSKWFSAFAAIAPKLTRDIHYEVDERKKTVGVKEEGVEFVEDQLGIENLYAPEHSQLVSYLNNSIKAKELFTRDKDYIVRNGEVVIVDEFTGRILDGRRYNEGIHQAIEAKEHVEIKNENQTLATVTLQNYFRLYDKLAGMTGTAETEAAELKSTYKLDVAAIPTNKENKRKDNVDLIYKTQEAKFEAVAEDIAERVEIGQPVLVGTTSVERSEYLSRLLQRRGIKHNVLNAKYHEKEAEIVAQAGRLGAVTVATNMAGRGTDIVLGGNPDIIADINLRERGLDPVETPEEYEEAWDDEIEKVRKESKEEAEKVREVGGLYVLGTERHESRRIDNQLRGRSARQGDPGETRFYLSMRDDLMVRFVGQTMEAMMTRLNIPDDEAIDSKMVTNAIKGAQSQVESANFEMRKNVLKYDEVMNEQRKVIYGERRQILEGEDVEKQIRSMLKDTIEAYVDGATAEGYVEDWDLDTLWNALDSLYGPTFTHEELVEGDEYGRPGELSSSQLLDALLEDANREYDELEEKVSEVAGEEQMRGMERAALLNVVDQKWREHLYEMDYLKEGIGLRAMAQRDPLVEYQREGGDMFNRMKDGIKEETVRQLFLVRNQLKQAGQVHVEDPAAGNEGVAVDRATQTTMGG.

Residues Gln-86, 104-108 (GEGKT), and Asp-493 contribute to the ATP site.

It belongs to the SecA family. Monomer and homodimer. Part of the essential Sec protein translocation apparatus which comprises SecA, SecYEG and auxiliary proteins SecDF. Other proteins may also be involved.

It localises to the cell membrane. The protein localises to the cytoplasm. The catalysed reaction is ATP + H2O + cellular proteinSide 1 = ADP + phosphate + cellular proteinSide 2.. Part of the Sec protein translocase complex. Interacts with the SecYEG preprotein conducting channel. Has a central role in coupling the hydrolysis of ATP to the transfer of proteins into and across the cell membrane, serving as an ATP-driven molecular motor driving the stepwise translocation of polypeptide chains across the membrane. This is Protein translocase subunit SecA 1 from Corynebacterium jeikeium (strain K411).